The following is a 264-amino-acid chain: Undecaprenyl-diphosphatase (264 aa).

8 consecutive transmembrane segments (helical) span residues 15–37 (GLTEFLPVSSTGHLIITGHLLGF), 42–62 (AASFEVAIQLGAILAVVVLYW), 84–104 (YLLFLTSLPASVLGLLAHDFI), 108–128 (LFNPYTVAWALGVGAIMILIV), 143–163 (VTPKLALGIGCFQCLALWPGF), 182–202 (IAAEYSFIAAVPIMFAATGYD), 217–237 (FLAVGFIVSFLSAWAAVKGFI), and 243–263 (LTLRPFAYYRLALAPLVLFFW).

It belongs to the UppP family.

Its subcellular location is the cell inner membrane. The enzyme catalyses di-trans,octa-cis-undecaprenyl diphosphate + H2O = di-trans,octa-cis-undecaprenyl phosphate + phosphate + H(+). In terms of biological role, catalyzes the dephosphorylation of undecaprenyl diphosphate (UPP). Confers resistance to bacitracin. The protein is Undecaprenyl-diphosphatase of Maridesulfovibrio salexigens (strain ATCC 14822 / DSM 2638 / NCIMB 8403 / VKM B-1763) (Desulfovibrio salexigens).